A 282-amino-acid chain; its full sequence is Flagellin (282 aa).

Belongs to the bacterial flagellin family.

The protein localises to the secreted. It is found in the bacterial flagellum. Flagellin is the subunit protein which polymerizes to form the filaments of bacterial flagella. The flagellum is required to cause a persistent disease in a murine model of infection. The sequence is that of Flagellin (fliC) from Brucella melitensis biotype 1 (strain ATCC 23456 / CCUG 17765 / NCTC 10094 / 16M).